The following is a 48-amino-acid chain: Small polypeptide DEVIL 22 (48 aa).

A helical membrane pass occupies residues 7-23 (KLNKGHAFTSKCASLVK). The tract at residues 13 to 44 (AFTSKCASLVKEQRARLYILRRCATMLCCWYI) is required for DVL/RTFL small polypeptide activity.

This sequence belongs to the DVL/RTFL small polypeptides family.

The protein localises to the cell membrane. Small polypeptide acting as a regulatory molecule which coordinates cellular responses required for differentiation, growth and development, probably by restricting polar cell proliferation in lateral organs and coordinating socket cell recruitment and differentiation at trichome sites. The sequence is that of Small polypeptide DEVIL 22 from Arabidopsis thaliana (Mouse-ear cress).